Consider the following 142-residue polypeptide: Mediator of RNA polymerase II transcription subunit 21 (142 aa).

Positions 87-131 (AEEQLSRIDSLQKKLIQVEGEKIEAIKRKESLTKDIEELINEFTE) form a coiled coil.

Belongs to the Mediator complex subunit 21 family. As to quaternary structure, component of the Mediator complex.

Its subcellular location is the nucleus. In terms of biological role, component of the Mediator complex, a coactivator involved in the regulated transcription of nearly all RNA polymerase II-dependent genes. Mediator functions as a bridge to convey information from gene-specific regulatory proteins to the basal RNA polymerase II transcription machinery. Mediator is recruited to promoters by direct interactions with regulatory proteins and serves as a scaffold for the assembly of a functional preinitiation complex with RNA polymerase II and the general transcription factors. This Eremothecium gossypii (strain ATCC 10895 / CBS 109.51 / FGSC 9923 / NRRL Y-1056) (Yeast) protein is Mediator of RNA polymerase II transcription subunit 21 (SRB7).